Reading from the N-terminus, the 447-residue chain is Clusterin (447 aa).

Residues 1–22 form the signal peptide; the sequence is MKTLLLCVGLLLSWERGQVLGD. The Nuclear localization signal motif lies at 77-80; it reads KKNK. Residues Asn-85 and Asn-102 are each glycosylated (N-linked (GlcNAc...) asparagine). 5 cysteine pairs are disulfide-bonded: Cys-101–Cys-311, Cys-112–Cys-303, Cys-115–Cys-300, Cys-120–Cys-293, and Cys-128–Cys-283. Residue Ser-132 is modified to Phosphoserine. Residues Asn-144, Asn-289, Asn-326, Asn-352, and Asn-372 are each glycosylated (N-linked (GlcNAc...) asparagine). Ser-394 carries the phosphoserine modification. The Nuclear localization signal motif lies at 441–445; the sequence is RKKKR.

This sequence belongs to the clusterin family. In terms of assembly, antiparallel disulfide-linked heterodimer of an alpha chain and a beta chain. Self-associates and forms higher oligomers. Interacts with a broad range of misfolded proteins, including APP, APOC2 and LYZ. Slightly acidic pH promotes interaction with misfolded proteins. Forms high-molecular weight oligomers upon interaction with misfolded proteins. Interacts with APOA1, LRP2, CLUAP1 and PON1. Interacts with the complement membrane attack complex. Interacts (via alpha chain) with XRCC6. Interacts with SYVN1, COMMD1, BTRC, CUL1 and with ubiquitin and SCF (SKP1-CUL1-F-box protein) E3 ubiquitin-protein ligase complexes. Interacts (via alpha chain) with BAX in stressed cells, where BAX undergoes a conformation change leading to association with the mitochondrial membrane. Does not interact with BAX in unstressed cells. Found in a complex with LTF, CLU, EPPIN and SEMG1. Interacts (immaturely glycosylated pre-secreted form) with HSPA5; this interaction promotes CLU stability and facilitates stress-induced CLU retrotranslocation from the secretory pathway to the mitochondria, thereby reducing stress-induced apoptosis by stabilizing mitochondrial membrane integrity. Interacts with BCL2L1; this interaction releases and activates BAX and promotes cell death. Interacts with TGFBR2 and ACVR1. Interacts (secreted form) with STMN3; this interaction may act as an important modulator during neuronal differentiation. Interacts with VLDLR and LRP8. Proteolytically cleaved on its way through the secretory system, probably within the Golgi lumen. Proteolytic cleavage is not necessary for its chaperone activity. All non-secreted forms are not proteolytically cleaved. Chaperone activity of uncleaved forms is dependent on a non-reducing environment. Post-translationally, polyubiquitinated, leading to proteasomal degradation. Under cellular stress, the intracellular level of cleaved form is reduced due to proteasomal degradation. In terms of processing, heavily N-glycosylated. About 30% of the protein mass is comprised of complex N-linked carbohydrate. Endoplasmic reticulum (ER) stress induces changes in glycosylation status and increases level of hypoglycosylated forms. Core carbohydrates are essential for chaperone activity. Non-secreted forms are hypoglycosylated or unglycosylated.

The protein localises to the secreted. The protein resides in the nucleus. It localises to the cytoplasm. It is found in the mitochondrion membrane. Its subcellular location is the cytosol. The protein localises to the microsome. The protein resides in the endoplasmic reticulum. It localises to the mitochondrion. It is found in the perinuclear region. Its subcellular location is the cytoplasmic vesicle. The protein localises to the secretory vesicle. The protein resides in the chromaffin granule. Functions as extracellular chaperone that prevents aggregation of non native proteins. Prevents stress-induced aggregation of blood plasma proteins. Inhibits formation of amyloid fibrils by APP, APOC2, B2M, CALCA, CSN3, SNCA and aggregation-prone LYZ variants (in vitro). Does not require ATP. Maintains partially unfolded proteins in a state appropriate for subsequent refolding by other chaperones, such as HSPA8/HSC70. Does not refold proteins by itself. Binding to cell surface receptors triggers internalization of the chaperone-client complex and subsequent lysosomal or proteasomal degradation. When secreted, protects cells against apoptosis and against cytolysis by complement: inhibits assembly of the complement membrane attack complex (MAC) by preventing polymerization of C9 pore component of the MAC complex. Intracellular forms interact with ubiquitin and SCF (SKP1-CUL1-F-box protein) E3 ubiquitin-protein ligase complexes and promote the ubiquitination and subsequent proteasomal degradation of target proteins. Promotes proteasomal degradation of COMMD1 and IKBKB. Modulates NF-kappa-B transcriptional activity. Following stress, promotes apoptosis. Inhibits apoptosis when associated with the mitochondrial membrane by interference with BAX-dependent release of cytochrome c into the cytoplasm. Plays a role in the regulation of cell proliferation. An intracellular form suppresses stress-induced apoptosis by stabilizing mitochondrial membrane integrity through interaction with HSPA5. Secreted form does not affect caspase or BAX-mediated intrinsic apoptosis and TNF-induced NF-kappa-B-activity. Secreted form act as an important modulator during neuronal differentiation through interaction with STMN3. Plays a role in the clearance of immune complexes that arise during cell injury. This chain is Clusterin (CLU), found in Oryctolagus cuniculus (Rabbit).